The chain runs to 270 residues: Imidazole glycerol phosphate synthase subunit HisF (270 aa).

Residues D11 and D135 contribute to the active site.

This sequence belongs to the HisA/HisF family. As to quaternary structure, heterodimer of HisH and HisF.

It localises to the cytoplasm. It carries out the reaction 5-[(5-phospho-1-deoxy-D-ribulos-1-ylimino)methylamino]-1-(5-phospho-beta-D-ribosyl)imidazole-4-carboxamide + L-glutamine = D-erythro-1-(imidazol-4-yl)glycerol 3-phosphate + 5-amino-1-(5-phospho-beta-D-ribosyl)imidazole-4-carboxamide + L-glutamate + H(+). It participates in amino-acid biosynthesis; L-histidine biosynthesis; L-histidine from 5-phospho-alpha-D-ribose 1-diphosphate: step 5/9. Its function is as follows. IGPS catalyzes the conversion of PRFAR and glutamine to IGP, AICAR and glutamate. The HisF subunit catalyzes the cyclization activity that produces IGP and AICAR from PRFAR using the ammonia provided by the HisH subunit. This is Imidazole glycerol phosphate synthase subunit HisF from Haloquadratum walsbyi (strain DSM 16790 / HBSQ001).